The following is a 567-amino-acid chain: Glutamate--tRNA ligase (567 aa).

The 'HIGH' region motif lies at Pro106–Asn116.

The protein belongs to the class-I aminoacyl-tRNA synthetase family. Glutamate--tRNA ligase type 2 subfamily.

It is found in the cytoplasm. It carries out the reaction tRNA(Glu) + L-glutamate + ATP = L-glutamyl-tRNA(Glu) + AMP + diphosphate. Catalyzes the attachment of glutamate to tRNA(Glu) in a two-step reaction: glutamate is first activated by ATP to form Glu-AMP and then transferred to the acceptor end of tRNA(Glu). This Sulfolobus acidocaldarius (strain ATCC 33909 / DSM 639 / JCM 8929 / NBRC 15157 / NCIMB 11770) protein is Glutamate--tRNA ligase.